A 778-amino-acid chain; its full sequence is DNA repair protein crb2 (778 aa).

A disordered region spans residues 35 to 56 (KVNASINPSPPRSNDNSNKEFS). The residue at position 73 (Thr73) is a Phosphothreonine; by ATM. Ser80 is subject to Phosphoserine; by ATM. An interaction with rad4 region spans residues 141-245 (VSNSSQILSP…PPAFLPETSE (105 aa)). A Phosphothreonine modification is found at Thr187. A Phosphothreonine; by cdc2 modification is found at Thr215. Thr235 is subject to Phosphothreonine. Residues 358–493 (SRRSFKNRVL…RRFQGRDLSF (136 aa)) are tudor-like. Residues 370-404 (FKGYPSFYYPATLVAPVHSAVTSSIMYKVQFDDAT) form an interaction with dimethylated histone H4 region. A BRCT domain is found at 535 to 653 (SNQLIFDDCV…RVVDFSPYLL (119 aa)).

In terms of assembly, homodimer. Dimerization is mediated via the BRCT domain. Interacts (via BRCT domain) with rad3. Interacts with rad4 (via BRCT1,2 domains); a single rad4 molecule interacts simultaneously with both Thr-187 phosphorylation sites in a crb2 dimer. Interacts (via Tudor domain) with histone H4K20me2. Interacts (via BRCT dmain) with histone H2AS128ph (gamma-H2A). Interacts with chk1. Interacts with sad1. Post-translationally, phosphorylation of Thr-73 and Ser-80 by rad3/ATM promotes interaction with chk1. Phosphorylation at Thr-187 is dependent on phosphorylation at Thr-215 and Thr-235. Phosphorylation at Thr-215 and Thr-235 may prime the non-canonical Thr-187 site for cdc2/CDK phosphorylation.

The protein localises to the nucleus. Functionally, essential for cell cycle arrest at the G1 and G2 stages following DNA damage by X-, and UV-irradiation, or inactivation of DNA ligase. Plays a role in the response to DNA damage. Interaction with rad4 via its phosphorylation sites in the N-terminus couples the DNA checkpoint apparatus to chromatin via interaction of its C-terminal BRCT domains with epigenetic modifications on histones H4 and H2A, respectively, in the G1/S phase of the cell cycle, and facilitates recruitment of the checkpoint kinase chk1. This Schizosaccharomyces pombe (strain 972 / ATCC 24843) (Fission yeast) protein is DNA repair protein crb2.